The sequence spans 236 residues: (5-formylfuran-3-yl)methyl phosphate synthase (236 aa).

The active-site Schiff-base intermediate with substrate is the lysine 27. The Proton acceptor role is filled by lysine 85.

It belongs to the MfnB family.

The catalysed reaction is 2 D-glyceraldehyde 3-phosphate = 4-(hydroxymethyl)-2-furancarboxaldehyde phosphate + phosphate + 2 H2O. It participates in cofactor biosynthesis; methanofuran biosynthesis. Functionally, catalyzes the formation of 4-(hydroxymethyl)-2-furancarboxaldehyde phosphate (4-HFC-P) from two molecules of glyceraldehyde-3-P (GA-3-P). This chain is (5-formylfuran-3-yl)methyl phosphate synthase, found in Methanococcus maripaludis (strain C5 / ATCC BAA-1333).